The sequence spans 408 residues: UV excision repair protein RAD23 homolog B (408 aa).

One can recognise a Ubiquitin-like domain in the interval 1–79 (MLVTLKTLQQ…VVVMVTKPKA (79 aa)). Over residues 80–111 (VTTPAPATTQQSNSAATTTVSSSTAPAVTQAP) the composition is skewed to low complexity. The segment at 80–176 (VTTPAPATTQ…TSGDSSRSNL (97 aa)) is disordered. Residues 112 to 122 (APAPASAPTPT) are compositionally biased toward pro residues. Residues 123–143 (PVSVTPAPTTASSEPAPASAA) show a composition bias toward low complexity. Basic and acidic residues predominate over residues 144–153 (KQEKPAERPV). Positions 154 to 174 (ETPVATTPTSTDSTSGDSSRS) are enriched in low complexity. Phosphothreonine is present on residues T155 and T164. Residue S174 is modified to Phosphoserine. Phosphothreonine is present on T186. A UBA 1 domain is found at 188–228 (QSYENMVTEIMSMGYEREQVIAALRASFNNPDRAVEYLLMG). S199 carries the phosphoserine modification. At Y202 the chain carries Phosphotyrosine. Residues 236 to 274 (QAVVDPPPAASTGAPQSSVAAAAATTTATTTTTSSGGHP) form a disordered region. The span at 255–268 (AAAAATTTATTTTT) shows a compositional bias: low complexity. The STI1 domain maps to 273 to 316 (HPLEFLRNQPQFQQMRQIIQQNPSLLPALLQQIGRENPQLLQQI). Positions 363–403 (PQEKEAIERLKALGFPEGLVIQAYFACEKNENLAANFLLQQ) constitute a UBA 2 domain.

It belongs to the RAD23 family. In terms of assembly, component of the XPC complex composed of XPC, RAD23B and CETN2. Interacts with NGLY1 and PSMC1. Interacts with ATXN3. Interacts with PSMD4 and PSMC5. Interacts with AMFR. Interacts with VCP; the interaction is indirect and mediated by NGLY1.

The protein localises to the nucleus. The protein resides in the cytoplasm. In terms of biological role, multiubiquitin chain receptor involved in modulation of proteasomal degradation. Binds to polyubiquitin chains. Proposed to be capable to bind simultaneously to the 26S proteasome and to polyubiquitinated substrates and to deliver ubiquitinated proteins to the proteasome. May play a role in endoplasmic reticulum-associated degradation (ERAD) of misfolded glycoproteins by association with PNGase and delivering deglycosylated proteins to the proteasome. Involved in global genome nucleotide excision repair (GG-NER) by acting as component of the XPC complex. Cooperatively with CETN2 appears to stabilize XPC. May protect XPC from proteasomal degradation. Its function is as follows. The XPC complex is proposed to represent the first factor bound at the sites of DNA damage and together with other core recognition factors, XPA, RPA and the TFIIH complex, is part of the pre-incision (or initial recognition) complex. The XPC complex recognizes a wide spectrum of damaged DNA characterized by distortions of the DNA helix such as single-stranded loops, mismatched bubbles or single-stranded overhangs. The orientation of XPC complex binding appears to be crucial for inducing a productive NER. XPC complex is proposed to recognize and to interact with unpaired bases on the undamaged DNA strand which is followed by recruitment of the TFIIH complex and subsequent scanning for lesions in the opposite strand in a 5'-to-3' direction by the NER machinery. Cyclobutane pyrimidine dimers (CPDs) which are formed upon UV-induced DNA damage esacpe detection by the XPC complex due to a low degree of structural perurbation. Instead they are detected by the UV-DDB complex which in turn recruits and cooperates with the XPC complex in the respective DNA repair. In vitro, the XPC:RAD23B dimer is sufficient to initiate NER; it preferentially binds to cisplatin and UV-damaged double-stranded DNA and also binds to a variety of chemically and structurally diverse DNA adducts. XPC:RAD23B contacts DNA both 5' and 3' of a cisplatin lesion with a preference for the 5' side. XPC:RAD23B induces a bend in DNA upon binding. XPC:RAD23B stimulates the activity of DNA glycosylases TDG and SMUG1. The polypeptide is UV excision repair protein RAD23 homolog B (RAD23B) (Bos taurus (Bovine)).